We begin with the raw amino-acid sequence, 398 residues long: Protochlorophyllide reductase, chloroplastic (398 aa).

A chloroplast-targeting transit peptide spans 1–64; sequence MALQAASLVS…NQQIGAIRAQ (64 aa).

This sequence belongs to the short-chain dehydrogenases/reductases (SDR) family. POR subfamily.

The protein resides in the plastid. Its subcellular location is the chloroplast. It carries out the reaction chlorophyllide a + NADP(+) = protochlorophyllide a + NADPH + H(+). It participates in porphyrin-containing compound metabolism; chlorophyll biosynthesis. Its function is as follows. Phototransformation of protochlorophyllide (Pchlide) to chlorophyllide (Chlide). The protein is Protochlorophyllide reductase, chloroplastic (PORA) of Cucumis sativus (Cucumber).